The primary structure comprises 84 residues: Cell division topological specificity factor (84 aa).

It belongs to the MinE family.

Functionally, prevents the cell division inhibition by proteins MinC and MinD at internal division sites while permitting inhibition at polar sites. This ensures cell division at the proper site by restricting the formation of a division septum at the midpoint of the long axis of the cell. The protein is Cell division topological specificity factor of Pseudomonas syringae pv. tomato (strain ATCC BAA-871 / DC3000).